The primary structure comprises 520 residues: Sodium-dependent dicarboxylate transporter SdcS (520 aa).

Helical transmembrane passes span 30-50 (AGQL…LLFF), 55-75 (LPWK…WWIT), 77-97 (AIPI…GHIL), 104-124 (SEYG…AIAM), 160-180 (SMFV…LAII), 207-227 (IGYA…PLII), 242-262 (FAKW…ITWL), 298-318 (KVVQ…EFLL), 323-343 (VTSS…LFVI), 362-382 (ELPW…KGIS), 399-419 (GVSP…LTEV), 428-448 (MILP…LLLM), 452-472 (AMAA…AIIF), and 491-511 (LISA…VLGI).

Belongs to the SLC13A/DASS transporter (TC 2.A.47) family. NADC subfamily.

The protein localises to the cell membrane. Its function is as follows. Mediates the transport of the dicarboxylates fumarate, malate, and succinate across the cytoplasmic membrane via a Na(+)-electrochemical gradient. This chain is Sodium-dependent dicarboxylate transporter SdcS (sdcS), found in Staphylococcus aureus (strain MSSA476).